Here is a 428-residue protein sequence, read N- to C-terminus: Chaperone SurA (428 aa).

The first 19 residues, 1–19, serve as a signal peptide directing secretion; that stretch reads MNIWKTLLLGMLVTGSAVS. 2 PpiC domains span residues 170–268 and 277–377; these read SVEY…KIED and VTEV…EVLD.

It is found in the periplasm. It carries out the reaction [protein]-peptidylproline (omega=180) = [protein]-peptidylproline (omega=0). Chaperone involved in the correct folding and assembly of outer membrane proteins. Recognizes specific patterns of aromatic residues and the orientation of their side chains, which are found more frequently in integral outer membrane proteins. May act in both early periplasmic and late outer membrane-associated steps of protein maturation. The sequence is that of Chaperone SurA from Vibrio vulnificus (strain CMCP6).